Consider the following 378-residue polypeptide: tRNA-specific 2-thiouridylase MnmA (378 aa).

Residues 9-16 and M35 contribute to the ATP site; that span reads GVSGGVDS. The segment at 94-96 is interaction with target base in tRNA; it reads NPD. C99 functions as the Nucleophile in the catalytic mechanism. Residues C99 and C195 are joined by a disulfide bond. ATP is bound at residue G123. The tract at residues 145–147 is interaction with tRNA; sequence KDQ. The Cysteine persulfide intermediate role is filled by C195. The interval 307–308 is interaction with tRNA; sequence RY.

Belongs to the MnmA/TRMU family.

Its subcellular location is the cytoplasm. The enzyme catalyses S-sulfanyl-L-cysteinyl-[protein] + uridine(34) in tRNA + AH2 + ATP = 2-thiouridine(34) in tRNA + L-cysteinyl-[protein] + A + AMP + diphosphate + H(+). In terms of biological role, catalyzes the 2-thiolation of uridine at the wobble position (U34) of tRNA, leading to the formation of s(2)U34. The protein is tRNA-specific 2-thiouridylase MnmA of Xanthomonas oryzae pv. oryzae (strain MAFF 311018).